The chain runs to 917 residues: Intercellular adhesion molecule 5 (917 aa).

A signal peptide spans 1–31 (MPGPSPGLRRALLGLWAALGLGILGISAVAL). The Extracellular portion of the chain corresponds to 32 to 833 (EPFWADLQPR…RITVRVAGPW (802 aa)). Ig-like C2-type domains are found at residues 48 to 130 (GGSL…PLPS), 135 to 235 (GENF…SLIA), 242 to 329 (DSER…LLTL), 337 to 402 (GKMV…SSEL), 408 to 486 (PRLD…VTLT), 491 to 567 (PALD…VAVT), 572 to 651 (PSFE…NRHG), 665 to 738 (PQMD…RTVT), and 745 to 828 (PVVA…ITVR). Asn-54 carries an N-linked (GlcNAc...) (high mannose) asparagine glycan. 2 disulfide bridges follow: Cys-55/Cys-99 and Cys-59/Cys-103. Asn-74 and Asn-137 each carry an N-linked (GlcNAc...) asparagine glycan. A disulfide bond links Cys-142 and Cys-198. Phosphothreonine is present on Thr-182. N-linked (GlcNAc...) asparagine glycosylation is found at Asn-195, Asn-214, Asn-274, Asn-316, Asn-371, and Asn-397. Cys-249 and Cys-302 are disulfide-bonded. Cys-344 and Cys-383 form a disulfide bridge. Disulfide bonds link Cys-415-Cys-470, Cys-498-Cys-551, and Cys-579-Cys-644. Asn-582 and Asn-645 each carry an N-linked (GlcNAc...) asparagine glycan. Cys-672 and Cys-724 form a disulfide bridge. N-linked (GlcNAc...) asparagine glycans are attached at residues Asn-762, Asn-793, and Asn-794. Residues Cys-767 and Cys-812 are joined by a disulfide bond. The chain crosses the membrane as a helical span at residues 834–854 (LWVAVGGAAGGAALLAAGAGL). Over 855–917 (AFYVQSTACK…EVFAIQLTSS (63 aa)) the chain is Cytoplasmic. Over residues 884–893 (GAGGTPGAEG) the composition is skewed to gly residues. The disordered stretch occupies residues 884 to 908 (GAGGTPGAEGGAETPGTAESPADGE).

Belongs to the immunoglobulin superfamily. ICAM family. Post-translationally, glycosylation at Asn-54 is critical for functional folding. Expressed on neurons in the most rostral segment of the mammalian brain, the telencephalon.

The protein resides in the membrane. Its function is as follows. ICAM proteins are ligands for the leukocyte adhesion protein LFA-1 (integrin alpha-L/beta-2). The chain is Intercellular adhesion molecule 5 (Icam5) from Mus musculus (Mouse).